An 88-amino-acid chain; its full sequence is Small ribosomal subunit protein uS15 (88 aa).

The protein belongs to the universal ribosomal protein uS15 family. Part of the 30S ribosomal subunit. Forms a bridge to the 50S subunit in the 70S ribosome, contacting the 23S rRNA.

Functionally, one of the primary rRNA binding proteins, it binds directly to 16S rRNA where it helps nucleate assembly of the platform of the 30S subunit by binding and bridging several RNA helices of the 16S rRNA. Its function is as follows. Forms an intersubunit bridge (bridge B4) with the 23S rRNA of the 50S subunit in the ribosome. The protein is Small ribosomal subunit protein uS15 of Psychrobacter arcticus (strain DSM 17307 / VKM B-2377 / 273-4).